The following is a 1025-amino-acid chain: MEDQIEQAVDIAIQGVGDPAVRQQALDFCNQVKASDEGWQMCLAMFAGDRKRSDAARYFSLQVIDEALGRLNREQLVYVRDHLFAYVRMGSGLSQGQANVNVGQAVSFADDPVHMKNKLGETLAYLFIMTYTEIWDTFFYDFERLLESPENQFGNPRAADLYLRVLNDIHREIGDTLIIRDPAVQSRNNDLKDLIRNRDMARLADSWKKILMYYKDQQLEPLATEIVNNALRVIGGWVSWAELTLIAEPEALEAIFNLLSSPKSRIHACDCLSEIVAKKMYPNAKFQLIQSLNLTSIIHTLSQSADIEFDERVAKLANSIGSELIHIVETESQEFSANCEALLLDMFPLLLRYLGNEYDDTSSQVLPSVGSYLQLVRRDSKREKAKINPNRLTKNTADQYENFPADRTFISDQRHAVVRSILEAVMKKCRYLDDQEWEEDEDGEFCELRQRLKNLQDMCASIDNQLFLDDVCPVISQALSLPPTADWRDIELGMFELQTLSEAMRSGALSTVKTGQNESPATQAFNNLFFQMVASDAVAQCPQPAVHLLFMEIVVKHSSLFSQHNTNLLNRVLEFFVSPLGIQNSESTKVQMRSWILFHKFCKSVKPQIGQVAQLLVDSIRPLLVIQTEDDTDSDDESAGSAFNAQLNLFELSGILVSILDEASATNGVEQTLQPIFTAVEKAIGVSPPNAESITLVHHNLVAIGTFAHGLDGSSNKLPDGILQLFKNSAEVVNVALDRIPDTKVREAARTVFTRLVPILGSSILSEISTLIQILLQRCSHAELADFLGFLGHLLHSFRNDEGVYNMLKSLLSPLCQRVFASLEELSASADAGNTDDKVLKVEIQRAYLMFIMQILRDRMGGAIVEDKQLADSIIKSVIHYASDPTDIYTCRSAASCLTKMIQLWGNGELEAASAEESVFDQGQKIDGFEQIVLEFSGLCWQVPASSGFNLQDAQSKILVTELGNIQKHIYLKKGDQFLSYLVEQYFPQIGVPDNAAKDYVEKLKTLENKDFKKYFSAFVNELVK.

This sequence belongs to the exportin family.

It localises to the nucleus. The protein resides in the cytoplasm. TRNA nucleus export receptor which facilitates tRNA translocation across the nuclear pore complex. Involved in pre-tRNA splicing, probably by affecting the interaction of pre-tRNA with splicing endonuclease. The chain is Exportin-T (LOS1) from Yarrowia lipolytica (strain CLIB 122 / E 150) (Yeast).